A 61-amino-acid polypeptide reads, in one-letter code: Metallothionein-1A (61 aa).

Met-1 carries the post-translational modification N-acetylmethionine. Residues 1–29 (MDPNCSCPTGGSCSCAGSCTCKACRCPSC) are beta. A divalent metal cation contacts are provided by Cys-5, Cys-7, Cys-13, Cys-15, Cys-19, Cys-21, Cys-24, Cys-26, Cys-29, Cys-33, Cys-34, Cys-36, Cys-37, Cys-41, Cys-44, Cys-48, Cys-50, and Cys-57. The segment at 30–61 (KKSCCSCCPVGCAKCAQGCVCKGASDKCSCCA) is alpha. The residue at position 58 (Ser-58) is a Phosphoserine. A divalent metal cation is bound by residues Cys-59 and Cys-60.

The protein belongs to the metallothionein superfamily. Type 1 family. Monomer.

Metallothioneins have a high content of cysteine residues that bind various heavy metals; these proteins are transcriptionally regulated by both heavy metals and glucocorticoids. This Bos taurus (Bovine) protein is Metallothionein-1A (MT1A).